The chain runs to 266 residues: Auxin-responsive protein IAA21 (266 aa).

Residues Leu24–Leu28 carry the EAR-like (transcriptional repression) motif. A disordered region spans residues Gly27–Leu50. Positions Cys146 to Gly248 constitute a PB1 domain.

Belongs to the Aux/IAA family. Homodimers and heterodimers. In terms of tissue distribution, highly expressed in flowers. Expressed in roots and seedlings.

The protein resides in the nucleus. Functionally, aux/IAA proteins are short-lived transcriptional factors that function as repressors of early auxin response genes at low auxin concentrations. In Oryza sativa subsp. japonica (Rice), this protein is Auxin-responsive protein IAA21 (IAA21).